Consider the following 518-residue polypeptide: Membrane-bound lytic murein transglycosylase F (518 aa).

The first 21 residues, 1–21, serve as a signal peptide directing secretion; that stretch reads MKKLKINYLFIGILALLLAVA. Positions 22–269 are non-LT domain; it reads LWPSIPWFGK…RIEEKYLGHG (248 aa). The segment at 270–518 is LT domain; it reads DDFDYVDTRT…SRKGSEEKQN (249 aa). E314 is an active-site residue.

In the N-terminal section; belongs to the bacterial solute-binding protein 3 family. This sequence in the C-terminal section; belongs to the transglycosylase Slt family.

It localises to the cell outer membrane. The enzyme catalyses Exolytic cleavage of the (1-&gt;4)-beta-glycosidic linkage between N-acetylmuramic acid (MurNAc) and N-acetylglucosamine (GlcNAc) residues in peptidoglycan, from either the reducing or the non-reducing ends of the peptidoglycan chains, with concomitant formation of a 1,6-anhydrobond in the MurNAc residue.. Functionally, murein-degrading enzyme that degrades murein glycan strands and insoluble, high-molecular weight murein sacculi, with the concomitant formation of a 1,6-anhydromuramoyl product. Lytic transglycosylases (LTs) play an integral role in the metabolism of the peptidoglycan (PG) sacculus. Their lytic action creates space within the PG sacculus to allow for its expansion as well as for the insertion of various structures such as secretion systems and flagella. This chain is Membrane-bound lytic murein transglycosylase F, found in Shigella dysenteriae serotype 1 (strain Sd197).